A 434-amino-acid polypeptide reads, in one-letter code: D-inositol 3-phosphate glycosyltransferase (434 aa).

A 1D-myo-inositol 3-phosphate-binding site is contributed by histidine 26. UDP-N-acetyl-alpha-D-glucosamine contacts are provided by residues 32 to 33 and glycine 40; that span reads QP. 1D-myo-inositol 3-phosphate is bound by residues 37-42, lysine 95, tyrosine 128, threonine 152, and arginine 172; that span reads DAGGMN. UDP-N-acetyl-alpha-D-glucosamine is bound by residues arginine 246 and lysine 251. Mg(2+)-binding residues include tyrosine 321, arginine 322, and alanine 324. 2 residues coordinate UDP-N-acetyl-alpha-D-glucosamine: glutamate 334 and glutamate 342. Residue threonine 348 participates in Mg(2+) binding.

This sequence belongs to the glycosyltransferase group 1 family. MshA subfamily. In terms of assembly, homodimer.

It catalyses the reaction 1D-myo-inositol 3-phosphate + UDP-N-acetyl-alpha-D-glucosamine = 1D-myo-inositol 2-acetamido-2-deoxy-alpha-D-glucopyranoside 3-phosphate + UDP + H(+). Functionally, catalyzes the transfer of a N-acetyl-glucosamine moiety to 1D-myo-inositol 3-phosphate to produce 1D-myo-inositol 2-acetamido-2-deoxy-glucopyranoside 3-phosphate in the mycothiol biosynthesis pathway. This Thermobifida fusca (strain YX) protein is D-inositol 3-phosphate glycosyltransferase.